We begin with the raw amino-acid sequence, 275 residues long: MAIVKSKPTSPGRRFVVKVVNHDLHKGEPYAPLLDKKSKSGGRNNTGRITTRHVGGGHKQHYRIVDFRRNKDGIPATVERIEYDPNRTAYIALVVYADGERRYIIAPKGLSAGDKIESGNAAAIKVGNTLPVRNIPLGSVIHCVELKPGKGAQLARSAGASAQLVAKDGAYVTLRLRSGEMRKVLSDCRATLGEVSNTEHNLRSLGKAGAKRWLGIRPTVRGVAMNPVDHPHGGGEGRTSGGRHPVSPWGIPTKGYKTRKNKRTDNMIVRRRDKK.

Over residues 28–38 (EPYAPLLDKKS) the composition is skewed to basic and acidic residues. Disordered regions lie at residues 28 to 55 (EPYA…RHVG) and 224 to 258 (AMNP…GYKT).

This sequence belongs to the universal ribosomal protein uL2 family. In terms of assembly, part of the 50S ribosomal subunit. Forms a bridge to the 30S subunit in the 70S ribosome.

Its function is as follows. One of the primary rRNA binding proteins. Required for association of the 30S and 50S subunits to form the 70S ribosome, for tRNA binding and peptide bond formation. It has been suggested to have peptidyltransferase activity; this is somewhat controversial. Makes several contacts with the 16S rRNA in the 70S ribosome. The protein is Large ribosomal subunit protein uL2 of Cellvibrio japonicus (strain Ueda107) (Pseudomonas fluorescens subsp. cellulosa).